A 329-amino-acid chain; its full sequence is Aspartate--ammonia ligase (329 aa).

It belongs to the class-II aminoacyl-tRNA synthetase family. AsnA subfamily.

It is found in the cytoplasm. The catalysed reaction is L-aspartate + NH4(+) + ATP = L-asparagine + AMP + diphosphate + H(+). The protein operates within amino-acid biosynthesis; L-asparagine biosynthesis; L-asparagine from L-aspartate (ammonia route): step 1/1. The polypeptide is Aspartate--ammonia ligase (Ureaplasma parvum serovar 3 (strain ATCC 27815 / 27 / NCTC 11736)).